A 561-amino-acid chain; its full sequence is Arginine--tRNA ligase (561 aa).

Positions 129–139 match the 'HIGH' region motif; it reads ANPTGPLHVGH.

It belongs to the class-I aminoacyl-tRNA synthetase family. Monomer.

It is found in the cytoplasm. It carries out the reaction tRNA(Arg) + L-arginine + ATP = L-arginyl-tRNA(Arg) + AMP + diphosphate. This chain is Arginine--tRNA ligase, found in Bordetella petrii (strain ATCC BAA-461 / DSM 12804 / CCUG 43448).